Consider the following 455-residue polypeptide: Bifunctional protein GlmU (455 aa).

The segment at 1–228 (MNNTLTTIIL…EFEIEGVNNR (228 aa)) is pyrophosphorylase. UDP-N-acetyl-alpha-D-glucosamine contacts are provided by residues 10-13 (LAAG), Lys-24, Gln-75, 80-81 (GT), 102-104 (YGD), Gly-138, Glu-153, Asn-168, and Asn-226. Asp-104 is a Mg(2+) binding site. Residue Asn-226 participates in Mg(2+) binding. The linker stretch occupies residues 229-249 (QQLAQLERKWQAKLVEDLQVQ). The tract at residues 250 to 455 (GVQFADPNRV…DNYQRPEKKK (206 aa)) is N-acetyltransferase. UDP-N-acetyl-alpha-D-glucosamine-binding residues include Arg-332 and Lys-350. The active-site Proton acceptor is His-362. Residues Tyr-365 and Asn-376 each coordinate UDP-N-acetyl-alpha-D-glucosamine. Residues Ala-379, 385 to 386 (NY), Ala-422, and Arg-439 each bind acetyl-CoA.

The protein in the N-terminal section; belongs to the N-acetylglucosamine-1-phosphate uridyltransferase family. It in the C-terminal section; belongs to the transferase hexapeptide repeat family. As to quaternary structure, homotrimer. Requires Mg(2+) as cofactor.

The protein localises to the cytoplasm. The catalysed reaction is alpha-D-glucosamine 1-phosphate + acetyl-CoA = N-acetyl-alpha-D-glucosamine 1-phosphate + CoA + H(+). The enzyme catalyses N-acetyl-alpha-D-glucosamine 1-phosphate + UTP + H(+) = UDP-N-acetyl-alpha-D-glucosamine + diphosphate. It functions in the pathway nucleotide-sugar biosynthesis; UDP-N-acetyl-alpha-D-glucosamine biosynthesis; N-acetyl-alpha-D-glucosamine 1-phosphate from alpha-D-glucosamine 6-phosphate (route II): step 2/2. It participates in nucleotide-sugar biosynthesis; UDP-N-acetyl-alpha-D-glucosamine biosynthesis; UDP-N-acetyl-alpha-D-glucosamine from N-acetyl-alpha-D-glucosamine 1-phosphate: step 1/1. The protein operates within bacterial outer membrane biogenesis; LPS lipid A biosynthesis. Catalyzes the last two sequential reactions in the de novo biosynthetic pathway for UDP-N-acetylglucosamine (UDP-GlcNAc). The C-terminal domain catalyzes the transfer of acetyl group from acetyl coenzyme A to glucosamine-1-phosphate (GlcN-1-P) to produce N-acetylglucosamine-1-phosphate (GlcNAc-1-P), which is converted into UDP-GlcNAc by the transfer of uridine 5-monophosphate (from uridine 5-triphosphate), a reaction catalyzed by the N-terminal domain. The sequence is that of Bifunctional protein GlmU from Psychrobacter sp. (strain PRwf-1).